Consider the following 321-residue polypeptide: Beta-ketoacyl-[acyl-carrier-protein] synthase III (321 aa).

Catalysis depends on residues cysteine 114 and histidine 248. Positions 249 to 253 are ACP-binding; it reads QANIR. Asparagine 278 is a catalytic residue.

This sequence belongs to the thiolase-like superfamily. FabH family. As to quaternary structure, homodimer.

Its subcellular location is the cytoplasm. It catalyses the reaction malonyl-[ACP] + acetyl-CoA + H(+) = 3-oxobutanoyl-[ACP] + CO2 + CoA. It functions in the pathway lipid metabolism; fatty acid biosynthesis. In terms of biological role, catalyzes the condensation reaction of fatty acid synthesis by the addition to an acyl acceptor of two carbons from malonyl-ACP. Catalyzes the first condensation reaction which initiates fatty acid synthesis and may therefore play a role in governing the total rate of fatty acid production. Possesses both acetoacetyl-ACP synthase and acetyl transacylase activities. Its substrate specificity determines the biosynthesis of branched-chain and/or straight-chain of fatty acids. The chain is Beta-ketoacyl-[acyl-carrier-protein] synthase III from Methylococcus capsulatus (strain ATCC 33009 / NCIMB 11132 / Bath).